The sequence spans 139 residues: uncharacterized protein (139 aa).

This is an uncharacterized protein from Saccharomyces cerevisiae (strain ATCC 204508 / S288c) (Baker's yeast).